The chain runs to 245 residues: Fibroblast growth factor-binding protein 3 (245 aa).

Positions 1 to 28 are cleaved as a signal peptide; the sequence is MSPPRPRASLSPLTLLLLLGGCLLSAAG. The disordered stretch occupies residues 33-52; sequence AAGREVTRASRPTVGSSGRF. 2 cysteine pairs are disulfide-bonded: Cys60–Cys81 and Cys91–Cys125. The segment at 136-216 is disordered; sequence CARKTAGSDL…PAAAGFQPNG (81 aa). Low complexity predominate over residues 170–180; that stretch reads RSRQSVRSPSS. The cysteines at positions 228 and 236 are disulfide-linked.

This sequence belongs to the fibroblast growth factor-binding protein family. As to quaternary structure, interacts with FGF2. In terms of tissue distribution, in the adult, highly expressed in brain with lower levels in ovary. In the embryo, highest levels are found in the brain and spinal cord at 14 dpc and expression is almost completely restricted to the brain by 18 dpc. In the adult and postnatal brain, highly expressed in the orbitofrontal cortex where it is concentrated primarily in differentiated neurons.

The protein resides in the secreted. Functionally, heparin-binding protein which binds to FGF2, prevents binding of FGF2 to heparin and probably inhibits immobilization of FGF2 on extracellular matrix glycosaminoglycans, allowing its release and subsequent activation of FGFR signaling which leads to increased vascular permeability. In Mus musculus (Mouse), this protein is Fibroblast growth factor-binding protein 3 (Fgfbp3).